Reading from the N-terminus, the 123-residue chain is Small ribosomal subunit protein uS13 (123 aa).

The disordered stretch occupies residues 95–123 (GLPVRGQRTKTNARTRKGPARTVAGKKKK).

The protein belongs to the universal ribosomal protein uS13 family. As to quaternary structure, part of the 30S ribosomal subunit. Forms a loose heterodimer with protein S19. Forms two bridges to the 50S subunit in the 70S ribosome.

Located at the top of the head of the 30S subunit, it contacts several helices of the 16S rRNA. In the 70S ribosome it contacts the 23S rRNA (bridge B1a) and protein L5 of the 50S subunit (bridge B1b), connecting the 2 subunits; these bridges are implicated in subunit movement. Contacts the tRNAs in the A and P-sites. The protein is Small ribosomal subunit protein uS13 of Heliobacterium modesticaldum (strain ATCC 51547 / Ice1).